The chain runs to 217 residues: Large ribosomal subunit protein uL1 (217 aa).

It belongs to the universal ribosomal protein uL1 family. As to quaternary structure, component of the large ribosomal subunit.

Its subcellular location is the cytoplasm. Component of the large ribosomal subunit. The ribosome is a large ribonucleoprotein complex responsible for the synthesis of proteins in the cell. In Xenopus laevis (African clawed frog), this protein is Large ribosomal subunit protein uL1 (rpl10a).